Here is a 160-residue protein sequence, read N- to C-terminus: Cytochrome b6-f complex subunit 4 (160 aa).

Transmembrane regions (helical) follow at residues 36 to 56, 95 to 115, and 128 to 148; these read LLYI…GLSV, LLGI…PFIE, and IAMA…IGAA.

The protein belongs to the cytochrome b family. PetD subfamily. The 4 large subunits of the cytochrome b6-f complex are cytochrome b6, subunit IV (17 kDa polypeptide, PetD), cytochrome f and the Rieske protein, while the 4 small subunits are PetG, PetL, PetM and PetN. The complex functions as a dimer.

It is found in the cellular thylakoid membrane. In terms of biological role, component of the cytochrome b6-f complex, which mediates electron transfer between photosystem II (PSII) and photosystem I (PSI), cyclic electron flow around PSI, and state transitions. This chain is Cytochrome b6-f complex subunit 4, found in Synechococcus sp. (strain CC9311).